Here is a 518-residue protein sequence, read N- to C-terminus: uncharacterized protein (518 aa).

Belongs to the MG032/MG096/MG288 family.

This is an uncharacterized protein from Mycoplasma pneumoniae (strain ATCC 29342 / M129 / Subtype 1) (Mycoplasmoides pneumoniae).